The sequence spans 362 residues: Histidinol-phosphate aminotransferase (362 aa).

Lys210 carries the N6-(pyridoxal phosphate)lysine modification.

The protein belongs to the class-II pyridoxal-phosphate-dependent aminotransferase family. Histidinol-phosphate aminotransferase subfamily. In terms of assembly, homodimer. Pyridoxal 5'-phosphate serves as cofactor.

The enzyme catalyses L-histidinol phosphate + 2-oxoglutarate = 3-(imidazol-4-yl)-2-oxopropyl phosphate + L-glutamate. It functions in the pathway amino-acid biosynthesis; L-histidine biosynthesis; L-histidine from 5-phospho-alpha-D-ribose 1-diphosphate: step 7/9. The polypeptide is Histidinol-phosphate aminotransferase (Rhodopirellula baltica (strain DSM 10527 / NCIMB 13988 / SH1)).